The sequence spans 635 residues: Early transcription factor 70 kDa subunit (635 aa).

The Helicase ATP-binding domain occupies 32–185; the sequence is RSIIDENKSV…SNIISLMSDE (154 aa). Position 45 to 52 (45 to 52) interacts with ATP; it reads HIMGSGKT. The DEXH box signature appears at 135–138; it reads DEAH. In terms of domain architecture, Helicase C-terminal spans 326-505; it reads KFKYFIGKIT…TLPFDIKKLL (180 aa).

This sequence belongs to the helicase family. VETF subfamily. Heterodimer of a 70 kDa and a 82 kDa subunit.

The protein localises to the virion. Functionally, acts with RNA polymerase to initiate transcription from early gene promoters. A DNA-dependent ATPase activity is associated with VETF. This is Early transcription factor 70 kDa subunit (VETFS) from Erythrocebus patas (Red guenon).